We begin with the raw amino-acid sequence, 391 residues long: Na(+)/H(+) antiporter NhaA 1 (391 aa).

11 consecutive transmembrane segments (helical) span residues 19–39 (FLASESAGGIVLMAAALAALI), 56–76 (VWLGLSVELWINDGLMAIFFL), 98–118 (ALPGFAAAGGMLVPALIYIAI), 128–148 (GWAIPAATDIAFALGVLSLLG), 157–177 (VFLAALAILDDLGAVTIIAFF), 180–200 (SGLNLPMLAAAFATLAVLIAL), 208–228 (LLPYLLLGALLWFFVLQSGVH), 264–284 (VAFAVVPIFGFANAGVSLSGI), 297–317 (VALGLFVGKQIGVFLAAVLAI), 335–355 (GVAILCGIGFTMSLFIGNLAF), and 364–384 (EVKVGVLIGSGLAAIAGILLL).

The protein belongs to the NhaA Na(+)/H(+) (TC 2.A.33) antiporter family.

It localises to the cell inner membrane. The catalysed reaction is Na(+)(in) + 2 H(+)(out) = Na(+)(out) + 2 H(+)(in). Its function is as follows. Na(+)/H(+) antiporter that extrudes sodium in exchange for external protons. This chain is Na(+)/H(+) antiporter NhaA 1, found in Pseudomonas savastanoi pv. phaseolicola (strain 1448A / Race 6) (Pseudomonas syringae pv. phaseolicola (strain 1448A / Race 6)).